Here is a 423-residue protein sequence, read N- to C-terminus: Flotillin-1 (423 aa).

The protein belongs to the band 7/mec-2 family. Flotillin subfamily. Heterooligomeric complex of flotillin-1 and flotillin-2 and caveolin-1 and caveolin-2. Normally expressed in growing retinal exons of newly differentiated ganglion cells at the retinal margin. After optic nerve injury, expressed in all retinal ganglion cells and retinal axons. Also expressed in endothelial cells, spinal cord, larval and adult skin, muscle processes, thymus and gill macrophages.

It is found in the cell membrane. The protein localises to the endosome. Its subcellular location is the membrane. The protein resides in the caveola. It localises to the melanosome. It is found in the membrane raft. Its function is as follows. May act as a scaffolding protein within caveolar membranes, functionally participating in formation of caveolae or caveolae-like vesicles. This chain is Flotillin-1 (flot1), found in Carassius auratus (Goldfish).